The following is a 344-amino-acid chain: Molybdate/tungstate import ATP-binding protein WtpC (344 aa).

The ABC transporter domain occupies 2-231; it reads LRVESVSKDY…PVDEGVARFL (230 aa). 33-40 is an ATP binding site; sequence GPSGAGKT. Positions 280 to 344 constitute a Mop domain; that stretch reads KTSARNEFRA…SFKTSAIKVF (65 aa).

Belongs to the ABC transporter superfamily. Sulfate/tungstate importer (TC 3.A.1.6) family. The complex is composed of two ATP-binding proteins (WtpC), two transmembrane proteins (WtpB) and a solute-binding protein (WtpA).

Its subcellular location is the cell membrane. It carries out the reaction tungstate(in) + ATP + H2O = tungstate(out) + ADP + phosphate + H(+). In terms of biological role, part of the ABC transporter complex WtpABC involved in molybdate/tungstate import. Responsible for energy coupling to the transport system. The protein is Molybdate/tungstate import ATP-binding protein WtpC (wtpC) of Pyrococcus abyssi (strain GE5 / Orsay).